Here is a 193-residue protein sequence, read N- to C-terminus: MPGATAVGITYAGGVILASEKRIAYGNFLVSKNTRKTFQITPYVGAACAGLVADMQILSLQISALAKIRKMDLKRDIPPNSVAKMMSNMMYERRFFPLLTQVIVGGVVGEPAIYTLDSLGSVLPDEYAAVGTGAEMALGVLDPQFKSGMSEKDAVDLAVRGIRSAALRDSFSGDGLDILALDANGAREIAQAA.

The propeptide at 1–4 (MPGA) is removed in mature form; by autocatalysis. Residue Thr-5 is the Nucleophile of the active site.

Belongs to the peptidase T1B family. As to quaternary structure, the 20S proteasome core is composed of 14 alpha and 14 beta subunits that assemble into four stacked heptameric rings, resulting in a barrel-shaped structure. The two inner rings, each composed of seven catalytic beta subunits, are sandwiched by two outer rings, each composed of seven alpha subunits. The catalytic chamber with the active sites is on the inside of the barrel. Has a gated structure, the ends of the cylinder being occluded by the N-termini of the alpha-subunits. Is capped at one or both ends by the proteasome regulatory ATPase, PAN.

It localises to the cytoplasm. It carries out the reaction Cleavage of peptide bonds with very broad specificity.. The formation of the proteasomal ATPase PAN-20S proteasome complex, via the docking of the C-termini of PAN into the intersubunit pockets in the alpha-rings, triggers opening of the gate for substrate entry. Interconversion between the open-gate and close-gate conformations leads to a dynamic regulation of the 20S proteasome proteolysis activity. In terms of biological role, component of the proteasome core, a large protease complex with broad specificity involved in protein degradation. In Cenarchaeum symbiosum (strain A), this protein is Proteasome subunit beta 1.